Here is a 357-residue protein sequence, read N- to C-terminus: Arginine kinase (357 aa).

A Phosphagen kinase N-terminal domain is found at 9-91; the sequence is KLEAGFKKLQ…FDPIIDDYHG (83 aa). Residue 64–68 coordinates substrate; sequence GVGIY. The 238-residue stretch at 119-356 folds into the Phosphagen kinase C-terminal domain; it reads FIISTRVRCG…LEMIKMEKAA (238 aa). ATP is bound by residues 122–126 and His-185; that span reads STRVR. Glu-225 serves as a coordination point for substrate. ATP is bound at residue Arg-229. Cys-271 contacts substrate. ATP is bound by residues 280–284 and 309–314; these read RASVH and RGTRGE. Glu-314 provides a ligand contact to substrate.

Belongs to the ATP:guanido phosphotransferase family. In terms of assembly, monomer.

It is found in the cytoplasm. The catalysed reaction is L-arginine + ATP = N(omega)-phospho-L-arginine + ADP + H(+). Functionally, catalyzes the reversible transfer of the terminal phosphoryl group of ATP to L-arginine. The sequence is that of Arginine kinase from Limulus polyphemus (Atlantic horseshoe crab).